Here is an 858-residue protein sequence, read N- to C-terminus: Heat shock protein 105 kDa (858 aa).

Residue Ser-2 is modified to N-acetylserine. Lys-471 carries the post-translational modification N6-acetyllysine. 2 disordered regions span residues Lys-500–Ala-585 and Val-801–Asp-858. Over residues Glu-504–Met-515 the composition is skewed to acidic residues. Residues Ser-509 and Ser-510 each carry the phosphoserine modification. A compositionally biased stretch (polar residues) spans Gln-533–Gly-549. At Ser-558 the chain carries Phosphoserine. Basic and acidic residues-rich tracts occupy residues Glu-564 to Ala-585 and Pro-806 to Arg-815. Ser-810 is modified (phosphoserine). Position 816 is a phosphothreonine (Thr-816). The segment covering Leu-822–Phe-834 has biased composition (basic and acidic residues).

The protein belongs to the heat shock protein 70 family. In terms of assembly, interacts with HSPA8/HSC70. Interacts with HSPA1A (via NBD) and HSPA1B (via NBD). Phosphorylation on Ser-509 may be important for regulation of the HSPA8/HSC70 chaperone activity. Predominantly expressed in the brain and also found in the liver.

It is found in the cytoplasm. In terms of biological role, acts as a nucleotide-exchange factor (NEF) for chaperone proteins HSPA1A and HSPA1B, promoting the release of ADP from HSPA1A/B thereby triggering substrate release. Prevents the aggregation of denatured proteins in cells under severe stress, on which the ATP levels decrease markedly. Inhibits HSPA8/HSC70 ATPase and chaperone activities. This is Heat shock protein 105 kDa (HSPH1) from Cricetulus griseus (Chinese hamster).